Here is a 308-residue protein sequence, read N- to C-terminus: Ribonuclease Z (308 aa).

Zn(2+) contacts are provided by His-63, His-65, Asp-67, His-68, His-141, Asp-212, and His-270. Catalysis depends on Asp-67, which acts as the Proton acceptor.

The protein belongs to the RNase Z family. As to quaternary structure, homodimer. It depends on Zn(2+) as a cofactor.

It carries out the reaction Endonucleolytic cleavage of RNA, removing extra 3' nucleotides from tRNA precursor, generating 3' termini of tRNAs. A 3'-hydroxy group is left at the tRNA terminus and a 5'-phosphoryl group is left at the trailer molecule.. Functionally, zinc phosphodiesterase, which displays some tRNA 3'-processing endonuclease activity. Probably involved in tRNA maturation, by removing a 3'-trailer from precursor tRNA. This chain is Ribonuclease Z, found in Pediococcus pentosaceus (strain ATCC 25745 / CCUG 21536 / LMG 10740 / 183-1w).